The sequence spans 343 residues: MSQKGKGSCPRPQQVPRLLVKGGIEVLDVKSGPDSITTIEAYLQPRPGQKNGYSTVITVQAEGYQDAPHSTEVPCYSCARIPLPTINDDITCPTLLMWEAVSVKTEVVGVSSILNMHSGAFRAFNGYGGGFTICGPRIHFFSVGGEPLDLQACMQNSKTVYPAPLIGPGEGERRETAQVLDTGYKARLDKDGLYPIECWCPDPAKNENTRYYGNLTGGPETPPVLAFTNTTTTILLDENGVGPLCKGDGLFLSAADVAGTYVDQRGRQYWRGLPRYFSIQLRKRNVRNPYPVSGLLNSLFNDLMPRMTGQSMQGSDAQVEEVRVYEGMEGLAPEIDMPPKAPR.

The protein belongs to the polyomaviruses coat protein VP1 family. In terms of assembly, homomultimer; disulfide-linked. The virus capsid is composed of 72 icosahedral units, each one composed of five disulfide-linked copies of VP1. Interacts with minor capsid proteins VP2 and VP3.

It is found in the virion. It localises to the host nucleus. Its function is as follows. Forms an icosahedral capsid with a T=7 symmetry and a 46-48 nm diameter. The capsid is composed of 72 pentamers linked to each other by disulfide bonds and associated with VP2 or VP3 proteins. Interacts with sialic acids on the cell surface to provide virion attachment to target cell. Once attached, the virion is internalized by endocytosis and traffics to the endoplasmic reticulum. Inside the endoplasmic reticulum, the protein folding machinery isomerizes VP1 interpentamer disulfide bonds, thereby triggering initial uncoating. Next, the virion uses the endoplasmic reticulum-associated degradation machinery to probably translocate in the cytosol before reaching the nucleus. Nuclear entry of the viral DNA involves the selective exposure and importin recognition of VP2/Vp3 nuclear localization signal. In late phase of infection, neo-synthesized VP1 encapsulates replicated genomic DNA in the nucleus, and participates in rearranging nucleosomes around the viral DNA. The polypeptide is Major capsid protein VP1 (Psittacidae (parrots)).